The chain runs to 107 residues: Flagellar hook-basal body complex protein FliE (107 aa).

Belongs to the FliE family.

The protein localises to the bacterial flagellum basal body. In Mesorhizobium japonicum (strain LMG 29417 / CECT 9101 / MAFF 303099) (Mesorhizobium loti (strain MAFF 303099)), this protein is Flagellar hook-basal body complex protein FliE.